A 97-amino-acid chain; its full sequence is UPF0125 protein plu3376 (97 aa).

It belongs to the UPF0125 (RnfH) family.

The sequence is that of UPF0125 protein plu3376 from Photorhabdus laumondii subsp. laumondii (strain DSM 15139 / CIP 105565 / TT01) (Photorhabdus luminescens subsp. laumondii).